An 852-amino-acid polypeptide reads, in one-letter code: MFFACYCALRTNVKKYRYQDEDGPHDHSLPRLTHEVRGPELVHVSEKNLSQIENVHGYVLQSHISPLKASPAPIIVNTDTLDTIPYVNGTEIEYEFEEITLERGNSGLGFSIAGGTDNPHIGDDPGIFITKIIPGGAAAEDGRLRVNDCILRVNEVDVSEVSHSKAVEALKEAGSIVRLYVRRRRPILETVVEIKLFKGPKGLGFSIAGGVGNQHIPGDNSIYVTKIIDGGAAQKDGRLQVGDRLLMVNNYSLEEVTHEEAVAILKNTSDVVYLKVGKPTTIYMTDPYGPPDITHSYSPPMENHLLSGNNGTLEYKTSLPPISPGRYSPIPKHMLGEDDYTRPPEPVYSTVNKLCDKPASPRHYSPVECDKSFLLSTPYPHYHLGLLPDSDMTSHSQHSTATRQPSVTLQRAISLEGEPRKVVLHKGSTGLGFNIVGGEDGEGIFVSFILAGGPADLSGELQRGDQILSVNGIDLRGASHEQAAAALKGAGQTVTIIAQYQPEDYARFEAKIHDLREQMMNHSMSSGSGSLRTNQKRSLYVRAMFDYDKSKDSGLPSQGLSFKYGDILHVINASDDEWWQARRVTLDGDSEEMGVIPSKRRVERKERARLKTVKFNAKPGVIDSKGDIPGLGDDGYGTKTLRGQEDLILSYEPVTRQEINYTRPVIILGPMKDRINDDLISEFPDKFGSCVPHTTRPKRDYEVDGRDYHFVISREQMEKDIQEHKFIEAGQYNDNLYGTSVQSVRFVAERGKHCILDVSGNAIKRLQVAQLYPIAIFIKPKSLEPLMEMNKRLTEEQAKKTYDRAIKLEQEFGEYFTAIVQGDTLEDIYNQCKLVIEEQSGPFIWIPSKEKL.

2 S-palmitoyl cysteine lipidation sites follow: cysteine 5 and cysteine 7. Serine 28 bears the Phosphoserine mark. Position 58 is a phosphotyrosine (tyrosine 58). Position 65 is a phosphoserine (serine 65). 2 PDZ domains span residues glutamate 98 to arginine 185 and glutamate 193 to threonine 280. Phosphoserine is present on residues serine 307, serine 328, serine 360, serine 365, serine 406, and serine 414. The 82-residue stretch at lysine 421 to proline 502 folds into the PDZ 3 domain. A Phosphotyrosine modification is found at tyrosine 505. Residues serine 528, serine 530, and serine 553 each carry the phosphoserine modification. One can recognise an SH3 domain in the interval lysine 536–glutamate 606. One can recognise a Guanylate kinase-like domain in the interval threonine 662–glutamate 837. 2 positions are modified to phosphotyrosine: tyrosine 732 and tyrosine 737.

As to quaternary structure, interacts with NOS1/nNOS through second PDZ domain. Interacts with KCNJ2/Kir2.1 (via C-terminus) through one of its PDZ domains. Interacts with KCNJ4. Interacts with FRMPD4 (via C-terminus). Interacts through its PDZ domains with NETO1. Interacts with LRFN1, LRFN2 and LRFN4. Interacts with FASLG. Interacts with KCNJ4. Interacts with ADAM22. Interacts with DGKI (via PDZ-binding motif). In terms of processing, palmitoylation of isoform 1 and isoform 2 is not required for targeting to postsynaptic density. In terms of tissue distribution, brain. Highest levels of isoform 1 in cortex, olfactory bulb, thalamus, hypothalamus, striatum and hippocampus. Highest level of isoform 2 in olfactory bulb. Reduced levels in cortex and hippocampus. Highest level of isoform 4 in spinal cord. Low levels of isoform 4, isoform 6, and isoform 7 in superior cervical ganglion.

Its subcellular location is the cell membrane. It localises to the postsynaptic density. It is found in the synapse. The protein localises to the membrane. The protein resides in the cell projection. Its subcellular location is the axon. It localises to the perikaryon. Required for perception of chronic pain through NMDA receptor signaling. Regulates surface expression of NMDA receptors in dorsal horn neurons of the spinal cord. Interacts with the cytoplasmic tail of NMDA receptor subunits as well as inward rectifying potassium channels. Involved in regulation of synaptic stability at cholinergic synapses. Part of the postsynaptic protein scaffold of excitatory synapses. The sequence is that of Disks large homolog 2 (Dlg2) from Mus musculus (Mouse).